Reading from the N-terminus, the 431-residue chain is Na(+)/H(+) antiporter NhaA (431 aa).

The next 11 membrane-spanning stretches (helical) occupy residues 33–53 (VGGA…NSPW), 74–94 (LSIS…VVGV), 112–132 (ALPI…FVGV), 144–164 (GWAI…AVIA), 173–193 (IFLL…IAVF), 197–217 (QLSF…GLAV), 225–245 (FLLL…GVHA), 279–299 (FAVP…LSGF), 311–331 (VIAG…YVLA), 347–367 (VLGL…IGEL), and 379–399 (AKIA…VVLL).

Belongs to the NhaA Na(+)/H(+) (TC 2.A.33) antiporter family.

The protein localises to the cell membrane. It carries out the reaction Na(+)(in) + 2 H(+)(out) = Na(+)(out) + 2 H(+)(in). Functionally, na(+)/H(+) antiporter that extrudes sodium in exchange for external protons. This is Na(+)/H(+) antiporter NhaA from Mycolicibacterium smegmatis (strain ATCC 700084 / mc(2)155) (Mycobacterium smegmatis).